The sequence spans 109 residues: Ubiquitin-related modifier 1 homolog (109 aa).

G109 carries the 1-thioglycine modification. G109 is covalently cross-linked (Glycyl lysine isopeptide (Gly-Lys) (interchain with K-? in acceptor proteins)).

It belongs to the URM1 family. Post-translationally, C-terminal thiocarboxylation occurs in 2 steps, it is first acyl-adenylated (-COAMP) via the hesA/moeB/thiF part of the MOCS3 homolog, then thiocarboxylated (-COSH) via the rhodanese domain of the MOCS3 homolog.

The protein resides in the cytoplasm. It functions in the pathway tRNA modification; 5-methoxycarbonylmethyl-2-thiouridine-tRNA biosynthesis. Its function is as follows. Acts as a sulfur carrier required for 2-thiolation of mcm(5)S(2)U at tRNA wobble positions of cytosolic tRNA(Lys), tRNA(Glu) and tRNA(Gln). Serves as sulfur donor in tRNA 2-thiolation reaction by being thiocarboxylated (-COSH) at its C-terminus by MOCS3. The sulfur is then transferred to tRNA to form 2-thiolation of mcm(5)S(2)U. Also acts as a ubiquitin-like protein (UBL) that is covalently conjugated via an isopeptide bond to lysine residues of target proteins. The thiocarboxylated form serves as substrate for conjugation and oxidative stress specifically induces the formation of UBL-protein conjugates. This Anopheles gambiae (African malaria mosquito) protein is Ubiquitin-related modifier 1 homolog.